The primary structure comprises 96 residues: Co-chaperonin GroES (96 aa).

The protein belongs to the GroES chaperonin family. As to quaternary structure, heptamer of 7 subunits arranged in a ring. Interacts with the chaperonin GroEL.

It localises to the cytoplasm. In terms of biological role, together with the chaperonin GroEL, plays an essential role in assisting protein folding. The GroEL-GroES system forms a nano-cage that allows encapsulation of the non-native substrate proteins and provides a physical environment optimized to promote and accelerate protein folding. GroES binds to the apical surface of the GroEL ring, thereby capping the opening of the GroEL channel. The sequence is that of Co-chaperonin GroES from Shewanella baltica (strain OS223).